Here is a 61-residue protein sequence, read N- to C-terminus: Large ribosomal subunit protein eL37 (61 aa).

Residues cysteine 19, cysteine 22, cysteine 34, and cysteine 37 each coordinate Zn(2+). The C4-type zinc finger occupies cysteine 19–cysteine 37.

It belongs to the eukaryotic ribosomal protein eL37 family. It depends on Zn(2+) as a cofactor.

In terms of biological role, binds to the 23S rRNA. The polypeptide is Large ribosomal subunit protein eL37 (Saccharolobus islandicus (strain L.S.2.15 / Lassen #1) (Sulfolobus islandicus)).